We begin with the raw amino-acid sequence, 71 residues long: MVPPVQVSPLIKLGRYSALFLGVAYGAKRYNYLKPRAEEERRIAAEEKKKQDELKRIERELAEAQEDSILK.

Lys34 is subject to N6-acetyllysine. Ser68 carries the post-translational modification Phosphoserine.

It belongs to the ATPase e subunit family. In terms of assembly, component of the ATP synthase complex composed at least of ATP5F1A/subunit alpha, ATP5F1B/subunit beta, ATP5MC1/subunit c (homooctomer), MT-ATP6/subunit a, MT-ATP8/subunit 8, ATP5ME/subunit e, ATP5MF/subunit f, ATP5MG/subunit g, ATP5MK/subunit k, ATP5MJ/subunit j, ATP5F1C/subunit gamma, ATP5F1D/subunit delta, ATP5F1E/subunit epsilon, ATP5PF/subunit F6, ATP5PB/subunit b, ATP5PD/subunit d, ATP5PO/subunit OSCP. ATP synthase complex consists of a soluble F(1) head domain (subunits alpha(3) and beta(3)) - the catalytic core - and a membrane F(0) domain - the membrane proton channel (subunits c, a, 8, e, f, g, k and j). These two domains are linked by a central stalk (subunits gamma, delta, and epsilon) rotating inside the F1 region and a stationary peripheral stalk (subunits F6, b, d, and OSCP).

The protein resides in the mitochondrion. The protein localises to the mitochondrion inner membrane. Its function is as follows. Subunit e, of the mitochondrial membrane ATP synthase complex (F(1)F(0) ATP synthase or Complex V) that produces ATP from ADP in the presence of a proton gradient across the membrane which is generated by electron transport complexes of the respiratory chain. ATP synthase complex consist of a soluble F(1) head domain - the catalytic core - and a membrane F(1) domain - the membrane proton channel. These two domains are linked by a central stalk rotating inside the F(1) region and a stationary peripheral stalk. During catalysis, ATP synthesis in the catalytic domain of F(1) is coupled via a rotary mechanism of the central stalk subunits to proton translocation. In vivo, can only synthesize ATP although its ATP hydrolase activity can be activated artificially in vitro. Part of the complex F(0) domain. The polypeptide is ATP synthase F(0) complex subunit e, mitochondrial (Sus scrofa (Pig)).